The following is a 568-amino-acid chain: Natural resistance-associated macrophage protein 2 (568 aa).

Residues 1–20 (MVLDPKEKMPDDGASGDHGD) show a composition bias toward basic and acidic residues. The disordered stretch occupies residues 1 to 45 (MVLDPKEKMPDDGASGDHGDSASLGAINPAYSNSSLPHSTGDSEE). At 1 to 69 (MVLDPKEKMP…EEYSCFSFRK (69 aa)) the chain is on the cytoplasmic side. The segment covering 30–40 (AYSNSSLPHST) has biased composition (polar residues). Residues 70-90 (LWAFTGPGFLMSIAYLDPGNI) traverse the membrane as a helical segment. Residues 91 to 95 (ESDLQ) lie on the Extracellular side of the membrane. Residues 96-117 (SGAVAGFKLLWVLLLATIVGLL) traverse the membrane as a helical segment. The Cytoplasmic segment spans residues 118-154 (LQRLAARLGVVTGLHLAEVCHRQYPKVPRIILWLMVE). The chain crosses the membrane as a helical span at residues 155–175 (LAIIGSDMQEVIGSAIAINLL). The Extracellular portion of the chain corresponds to 176-179 (SAGR). The chain crosses the membrane as a helical span at residues 180–194 (VPLWGGVLITIADTF). Over 195 to 208 (VFLFLDKYGLRKLE) the chain is Cytoplasmic. A helical membrane pass occupies residues 209-229 (AFFGFLITIMALTFGYEYITV). Residues 230–255 (KPSQSQVLRGMFVPSCPGCRTPQVEQ) lie on the Extracellular side of the membrane. Residues 256-276 (AVGIVGAVIMPHNMYLHSALV) form a helical membrane-spanning segment. Over 277 to 301 (KSRQVNRANKQEVREANKYFFIESC) the chain is Cytoplasmic. A helical membrane pass occupies residues 302–322 (IALFVSFIINVFVVSVFAEAF). Topologically, residues 323-360 (FEKTNKQVVEVCKNNSSPHADLFPSDNSTLAVDIYKGG) are extracellular. Asparagine 336 and asparagine 349 each carry an N-linked (GlcNAc...) asparagine glycan. A helical membrane pass occupies residues 361–381 (VVLGCYFGPAALYIWAVGILA). Over 382–408 (AGQSSTMTGTYSGQFVMEGFLNLKWSR) the chain is Cytoplasmic. Residues 409–429 (FARVILTRSIAIIPTLLVAVF) form a helical membrane-spanning segment. Over 430 to 440 (QDVEHLTGMND) the chain is Extracellular. Residues 441-461 (FLNVLQSLQLPFALIPILTFT) form a helical membrane-spanning segment. The Cytoplasmic portion of the chain corresponds to 462–482 (SLRPVMSEFSNGIGWRIAGGI). A helical transmembrane segment spans residues 483–503 (LVLIVCSINMYFVVVYVQELG). The Extracellular portion of the chain corresponds to 504-506 (HVA). The chain crosses the membrane as a helical span at residues 507–527 (LYVVAAVVSVAYLTFVFYLGW). The Cytoplasmic portion of the chain corresponds to 528–568 (QCLIALGLSFLDCGRSYRLGLTAQPELYLLNTVDADSVVSR). The tract at residues 555–559 (YLLNT) is required for early endosome targeting. Leucine 556, serine 564, and serine 567 each carry phosphoserine.

Belongs to the NRAMP family. In terms of assembly, forms a complex with NDFIP1 and NEDD4L, in cortical neurons, in response to iron and cobalt exposure; this interaction leads to SLC11A2 ubiquitination by NEDD4L and proteasome-dependent degradation. Interacts with NDFIP1, NDFIP2 and WWP2; this interaction leads to SLC11A2 ubiquitination by WWP2 and subsequent proteasome-dependent degradation. Interacts with COX2 and TOM6 at the outer mitochondrion membrane. Interacts with ARRDC1; this interaction regulates the incorporation of SLC11A2 into extracellular vesicles through an ubiquitination-dependent mechanism. Interacts with ARRDC4; controls the incorporation of SLC11A2 into extracellular vesicles through an ubiquitination-dependent mechanism. Ubiquitinated by WWP2. Post-translationally, N-glycosylated. Abundantly expressed in erythroid precursor cells (at protein level). As to expression, expressed in duodenum (at protein level).

Its subcellular location is the golgi apparatus. It is found in the trans-Golgi network membrane. The protein resides in the early endosome membrane. It localises to the recycling endosome membrane. The protein localises to the cell membrane. Its subcellular location is the late endosome membrane. It is found in the lysosome membrane. The protein resides in the apical cell membrane. It localises to the mitochondrion outer membrane. The protein localises to the extracellular vesicle membrane. The catalysed reaction is Fe(2+)(in) + H(+)(in) = Fe(2+)(out) + H(+)(out). It carries out the reaction Co(2+)(out) + H(+)(out) = Co(2+)(in) + H(+)(in). It catalyses the reaction Cd(2+)(out) + H(+)(out) = Cd(2+)(in) + H(+)(in). The enzyme catalyses Mn(2+)(in) + H(+)(in) = Mn(2+)(out) + H(+)(out). The catalysed reaction is Zn(2+)(out) + H(+)(out) = Zn(2+)(in) + H(+)(in). It carries out the reaction Ni(2+)(out) + H(+)(out) = Ni(2+)(in) + H(+)(in). It catalyses the reaction H(+)(in) = H(+)(out). The enzyme catalyses Fe(2+)(in) = Fe(2+)(out). In terms of biological role, proton-coupled metal ion symporter operating with a proton to metal ion stoichiometry of 1:1. Selectively transports various divalent metal cations, in decreasing affinity: Cd(2+) &gt; Fe(2+) &gt; Co(2+), Mn(2+) &gt;&gt; Zn(2+), Ni(2+), VO(2+). Essential for maintenance of iron homeostasis by modulating intestinal absorption of dietary Fe(2+) and TF-associated endosomal Fe(2+) transport in erythroid precursors and other cells. Enables Fe(2+) and Mn(2+) ion entry into mitochondria, and is thus expected to promote mitochondrial heme synthesis, iron-sulfur cluster biogenesis and antioxidant defense. Can mediate uncoupled fluxes of either protons or metal ions. The protein is Natural resistance-associated macrophage protein 2 (Slc11a2) of Mus musculus (Mouse).